Reading from the N-terminus, the 390-residue chain is LIM/homeobox protein Lhx4 (390 aa).

2 consecutive LIM zinc-binding domains span residues 28–87 (PQCA…RFGT) and 88–150 (KCTA…AKQN). The segment at residues 157-216 (AKRPRTTITAKQLETLKNAYKNSPKPARHVREQLSSETGLDMRVVQVWFQNRRAKEKRLK) is a DNA-binding region (homeobox). The segment at 161–181 (RTTITAKQLETLKNAYKNSPK) is interaction with DNA. The interval 199-211 (RVVQVWFQNRRAK) is interaction with 5-mCpG DNA. Disordered regions lie at residues 230 to 253 (SVKR…GVSD) and 356 to 390 (AGGP…HPPF).

Its subcellular location is the nucleus. May play a critical role in the development of respiratory control mechanisms and in the normal growth and maturation of the lung. Binds preferentially to methylated DNA. This Homo sapiens (Human) protein is LIM/homeobox protein Lhx4 (LHX4).